The sequence spans 862 residues: Dipeptidyl peptidase 9 (862 aa).

Active-site charge relay system residues include Ser729, Asp807, and His839. Ser729 contacts Val-boroPro.

This sequence belongs to the peptidase S9B family. DPPIV subfamily. Homodimer. Forms a ternary complex with NLRP1, composed of a DPP9 homodimer, one full-length NLRP1 protein, and one cleaved C-terminus of NLRP1 (NACHT, LRR and PYD domains-containing protein 1, C-terminus). Forms a ternary complex with CARD8, composed of a DPP9 homodimer, one full-length NLRP1 protein, and one cleaved C-terminus of CARD8 (Caspase recruitment domain-containing protein 8, C-terminus). In the ternary complex, only one subunit of the DPP9 homodimer is bound to NLRP1 or CARD8. Detected in kidney, skin, brain, thymus and liver (at protein level).

It localises to the cytoplasm. It is found in the cytosol. The enzyme catalyses Release of an N-terminal dipeptide, Xaa-Yaa-|-Zaa-, from a polypeptide, preferentially when Yaa is Pro, provided Zaa is neither Pro nor hydroxyproline.. Its activity is regulated as follows. Inhibited by the serine proteinase inhibitor 4-(2-aminoethyl)benzenesulphonyl fluoride (AEBSF), and by di-isopropylfluorophosphate. Inhibited by Val-boroPro (Talabostat, PT-100), a non-selective inhibitor, which triggers pyroptosis in monocytes and macrophages. Val-boroPro inhibits activity by binding to the active site, mimicking a substrate-bound state, thereby displacing the C-terminal fragment of NLRP1, leading to activation of the NLRP1 inflammasome. In contrast, Val-boroPro does not directly displaces CARD8: it acts by promoting degradation of the N-terminal part of CARD8, leading to indirect disruption of the ternary complex. Its function is as follows. Dipeptidyl peptidase that cleaves off N-terminal dipeptides from proteins having a Pro or Ala residue at position 2. Acts as a key inhibitor of caspase-1-dependent monocyte and macrophage pyroptosis in resting cells by preventing activation of NLRP1 and CARD8. Sequesters the cleaved C-terminal part of NLRP1 and CARD8, which respectively constitute the active part of the NLRP1 and CARD8 inflammasomes, in a ternary complex, thereby preventing their oligomerization and activation. The dipeptidyl peptidase activity is required to suppress NLRP1 and CARD8; however, neither NLRP1 nor CARD8 are bona fide substrates of DPP9, suggesting the existence of substrate(s) required for NLRP1 and CARD8 inhibition. This is Dipeptidyl peptidase 9 from Mus musculus (Mouse).